The primary structure comprises 236 residues: MDLQRFNFLIMTTQGRVATMSFMSLDHAQKVDLAKTGLFFHNNLIKCIGCRATMDRVDARRVKRHTYSDTCVSAINALVANESLRKRSFASFKWARRQFGSRAREVDMLSRRGFYCVGKRLRCAGCKVVTTCVSVDGAQRAHAADCAFRRVFDVDLDACALANVVRVDLPPPRLEPRPSAPFDAAVSECKVCFVNEKSVCFLPCRHLVVCAECSPRCKRCCVCNGKIASRLSTIPQ.

The BIR repeat unit spans residues 85–150 (RKRSFASFKW…AHAADCAFRR (66 aa)). Positions 123, 126, 142, and 146 each coordinate Zn(2+). The RING-type zinc finger occupies 189-223 (CKVCFVNEKSVCFLPCRHLVVCAECSPRCKRCCVC).

This chain is Probable apoptosis inhibitor 2 (IAP2), found in Orgyia pseudotsugata multicapsid polyhedrosis virus (OpMNPV).